Consider the following 434-residue polypeptide: GTPase Obg (434 aa).

The region spanning 1–158 (MFIDRAKIYV…RWLYLELKLL (158 aa)) is the Obg domain. The region spanning 159 to 328 (ADVGLLGLPN…LLELMEKYVK (170 aa)) is the OBG-type G domain. GTP is bound by residues 165–172 (GLPNAGKS), 190–194 (FTTKT), 211–214 (DIPG), 280–283 (NKID), and 309–311 (SAK). The Mg(2+) site is built by S172 and T192. The OCT domain maps to 347-425 (KQENKKQEIP…IGNYVFKYNS (79 aa)).

This sequence belongs to the TRAFAC class OBG-HflX-like GTPase superfamily. OBG GTPase family. As to quaternary structure, monomer. Mg(2+) is required as a cofactor.

The protein localises to the cytoplasm. Functionally, an essential GTPase which binds GTP, GDP and possibly (p)ppGpp with moderate affinity, with high nucleotide exchange rates and a fairly low GTP hydrolysis rate. Plays a role in control of the cell cycle, stress response, ribosome biogenesis and in those bacteria that undergo differentiation, in morphogenesis control. The chain is GTPase Obg from Dictyoglomus turgidum (strain DSM 6724 / Z-1310).